Consider the following 616-residue polypeptide: Dihydroxy-acid dehydratase (616 aa).

Asp81 is a binding site for Mg(2+). Cys122 serves as a coordination point for [2Fe-2S] cluster. Mg(2+)-binding residues include Asp123 and Lys124. Lys124 is subject to N6-carboxylysine. Residue Cys195 participates in [2Fe-2S] cluster binding. Glu491 contributes to the Mg(2+) binding site. Residue Ser517 is the Proton acceptor of the active site.

It belongs to the IlvD/Edd family. In terms of assembly, homodimer. [2Fe-2S] cluster is required as a cofactor. Requires Mg(2+) as cofactor.

The enzyme catalyses (2R)-2,3-dihydroxy-3-methylbutanoate = 3-methyl-2-oxobutanoate + H2O. It carries out the reaction (2R,3R)-2,3-dihydroxy-3-methylpentanoate = (S)-3-methyl-2-oxopentanoate + H2O. It participates in amino-acid biosynthesis; L-isoleucine biosynthesis; L-isoleucine from 2-oxobutanoate: step 3/4. The protein operates within amino-acid biosynthesis; L-valine biosynthesis; L-valine from pyruvate: step 3/4. Its function is as follows. Functions in the biosynthesis of branched-chain amino acids. Catalyzes the dehydration of (2R,3R)-2,3-dihydroxy-3-methylpentanoate (2,3-dihydroxy-3-methylvalerate) into 2-oxo-3-methylpentanoate (2-oxo-3-methylvalerate) and of (2R)-2,3-dihydroxy-3-methylbutanoate (2,3-dihydroxyisovalerate) into 2-oxo-3-methylbutanoate (2-oxoisovalerate), the penultimate precursor to L-isoleucine and L-valine, respectively. In Escherichia coli O17:K52:H18 (strain UMN026 / ExPEC), this protein is Dihydroxy-acid dehydratase.